The sequence spans 518 residues: uncharacterized protein (518 aa).

The protein resides in the virion. This is an uncharacterized protein from Acanthamoeba polyphaga (Amoeba).